The sequence spans 155 residues: Endoribonuclease YbeY (155 aa).

Zn(2+) contacts are provided by H114, H118, and H124.

This sequence belongs to the endoribonuclease YbeY family. Requires Zn(2+) as cofactor.

Its subcellular location is the cytoplasm. Functionally, single strand-specific metallo-endoribonuclease involved in late-stage 70S ribosome quality control and in maturation of the 3' terminus of the 16S rRNA. This chain is Endoribonuclease YbeY, found in Escherichia coli O157:H7.